The following is a 647-amino-acid chain: RAF proto-oncogene serine/threonine-protein kinase (647 aa).

Residue Ser43 is modified to Phosphoserine. An RBD domain is found at 56 to 131; that stretch reads NTIRVFLPNK…IGEELQVDFL (76 aa). The segment at 138 to 184 adopts a Phorbol-ester/DAG-type zinc-finger fold; the sequence is THNFARKTFLKLAFCDICQKFLLNGFRCQTCGYKFHEHCSTKVPTMC. Disordered stretches follow at residues 236-269 and 284-334; these read HVFT…VSTT and HSES…RPRG. A compositionally biased stretch (polar residues) spans 239–269; sequence TFNTSNPSSEGTLSQRQRSTSTPNVHMVSTT. Ser259 carries the post-translational modification Phosphoserine. Thr268 carries the phosphothreonine; by autocatalysis modification. A compositionally biased stretch (low complexity) spans 286–297; that stretch reads ESASPSALSGSP. Polar residues predominate over residues 298–309; sequence NNMSPTGWSQPK. Residue Ser338 is modified to Phosphoserine. One can recognise a Protein kinase domain in the interval 349–609; that stretch reads VMLSTRIGSG…PQILSSIELL (261 aa). ATP is bound by residues 355–363 and Lys375; that span reads IGSGSFGTV. Catalysis depends on Asp468, which acts as the Proton acceptor. Phosphoserine occurs at positions 499 and 621.

The protein belongs to the protein kinase superfamily. TKL Ser/Thr protein kinase family. RAF subfamily. In terms of processing, phosphorylation at Ser-259 inactivates kinase activity. Dephosphorylation of Ser-259 by a complex containing protein phosphatase 1 relieves inactivation, leading to stimulate RAF1 activity. Isoform 1 was present in all tissues tested: skeletal muscle, intestine, brain, gizzard, heart, lung, kidney, bone marrow, spleen and bursa of Fabricius. Isoform 2 was only detected in brain, heart and skeletal muscle. In brain and heart isoform 1 is more abundant than isoform 2. In skeletal muscle isoform 2 is more abundant than isoform 1.

The protein resides in the cytoplasm. It is found in the cell membrane. It carries out the reaction L-seryl-[protein] + ATP = O-phospho-L-seryl-[protein] + ADP + H(+). The catalysed reaction is L-threonyl-[protein] + ATP = O-phospho-L-threonyl-[protein] + ADP + H(+). In terms of biological role, serine/threonine-protein kinase that acts as a regulatory link between the membrane-associated Ras GTPases and the MAPK/ERK cascade, and this critical regulatory link functions as a switch determining cell fate decisions. RAF1 activation initiates a mitogen-activated protein kinase (MAPK) cascade that comprises a sequential phosphorylation of the dual-specific MAPK kinases (MAP2K1/MEK1 and MAP2K2/MEK2) and the extracellular signal-regulated kinases (MAPK3/ERK1 and MAPK1/ERK2). This chain is RAF proto-oncogene serine/threonine-protein kinase (RAF1), found in Gallus gallus (Chicken).